The primary structure comprises 256 residues: Pimeloyl-[acyl-carrier protein] methyl ester esterase (256 aa).

One can recognise an AB hydrolase-1 domain in the interval 15–242 (HLVLLHGWGL…AAHAPFISHP (228 aa)). Substrate contacts are provided by residues tryptophan 22, 82–83 (SL), and 143–147 (FLALQ). Serine 82 serves as the catalytic Nucleophile. Active-site residues include aspartate 207 and histidine 235. Histidine 235 serves as a coordination point for substrate.

Belongs to the AB hydrolase superfamily. Carboxylesterase BioH family. As to quaternary structure, monomer.

It localises to the cytoplasm. The enzyme catalyses 6-carboxyhexanoyl-[ACP] methyl ester + H2O = 6-carboxyhexanoyl-[ACP] + methanol + H(+). The protein operates within cofactor biosynthesis; biotin biosynthesis. The physiological role of BioH is to remove the methyl group introduced by BioC when the pimeloyl moiety is complete. It allows to synthesize pimeloyl-ACP via the fatty acid synthetic pathway through the hydrolysis of the ester bonds of pimeloyl-ACP esters. This chain is Pimeloyl-[acyl-carrier protein] methyl ester esterase, found in Escherichia coli O81 (strain ED1a).